A 183-amino-acid chain; its full sequence is Ferritin heavy polypeptide-like 17 (183 aa).

The Ferritin-like diiron domain occupies 11–160 (QKYDTNCDAA…GYVSNLRKIC (150 aa)). Positions 28, 66, 108, and 142 each coordinate Fe cation.

It belongs to the ferritin family. Testis specific. Also expressed in several cancers.

This chain is Ferritin heavy polypeptide-like 17 (FTHL17), found in Homo sapiens (Human).